The following is an 858-amino-acid chain: Protein VACUOLELESS1 (858 aa).

This sequence belongs to the VPS16 family. In terms of assembly, core component of at least two putative endosomal tethering complexes, the homotypic fusion and vacuole protein sorting (HOPS) complex and the class C core vacuole/endosome tethering (CORVET) complex. Their common core is composed of the class C Vps proteins VPS11, VCL1, VPS18 and VPS33, which in HOPS further associates with VPS39 and VPS41 and in CORVET with VPS3. As to expression, expressed in roots, leaves, stems, siliques, flowers and mature pollen.

It is found in the vacuole membrane. It localises to the prevacuolar compartment membrane. In terms of biological role, required for vacuole biogenesis and vacuole enlargment in dividing and expanding cells. Involved in the docking or fusion of prevacuolar vesicles. Important for the function of both male and female gametophytes, but is not essential for the germination and development of pollen. This is Protein VACUOLELESS1 (VCL1) from Arabidopsis thaliana (Mouse-ear cress).